The chain runs to 489 residues: N-succinylglutamate 5-semialdehyde dehydrogenase (489 aa).

224–229 contacts NAD(+); that stretch reads GSAKVG. Active-site residues include Glu247 and Cys281.

It belongs to the aldehyde dehydrogenase family. AstD subfamily.

The catalysed reaction is N-succinyl-L-glutamate 5-semialdehyde + NAD(+) + H2O = N-succinyl-L-glutamate + NADH + 2 H(+). Its pathway is amino-acid degradation; L-arginine degradation via AST pathway; L-glutamate and succinate from L-arginine: step 4/5. Functionally, catalyzes the NAD-dependent reduction of succinylglutamate semialdehyde into succinylglutamate. The sequence is that of N-succinylglutamate 5-semialdehyde dehydrogenase from Chromohalobacter salexigens (strain ATCC BAA-138 / DSM 3043 / CIP 106854 / NCIMB 13768 / 1H11).